We begin with the raw amino-acid sequence, 64 residues long: Potassium channel toxin kappa-KTx 4.1 (64 aa).

Residues 1 to 26 (MKSTLMTASLLILVVLFIIDYASVYA) form the signal peptide. Positions 27 to 38 (EFIDGEISLERE) are excised as a propeptide. 2 disulfide bridges follow: C43–C61 and C47–C57.

This sequence belongs to the short scorpion toxin superfamily. Potassium channel inhibitor kappa-KTx family. Kappa-KTx 4 subfamily. Expressed by the venom gland.

Its subcellular location is the secreted. In terms of biological role, potassium channel inhibitor (Kv). The protein is Potassium channel toxin kappa-KTx 4.1 of Heterometrus petersii (Asian forest scorpion).